Consider the following 158-residue polypeptide: NADH-quinone oxidoreductase subunit B (158 aa).

Residues cysteine 37, cysteine 38, cysteine 102, and cysteine 132 each coordinate [4Fe-4S] cluster.

Belongs to the complex I 20 kDa subunit family. NDH-1 is composed of 14 different subunits. Subunits NuoB, C, D, E, F, and G constitute the peripheral sector of the complex. The cofactor is [4Fe-4S] cluster.

It is found in the cell inner membrane. The enzyme catalyses a quinone + NADH + 5 H(+)(in) = a quinol + NAD(+) + 4 H(+)(out). NDH-1 shuttles electrons from NADH, via FMN and iron-sulfur (Fe-S) centers, to quinones in the respiratory chain. The immediate electron acceptor for the enzyme in this species is believed to be ubiquinone. Couples the redox reaction to proton translocation (for every two electrons transferred, four hydrogen ions are translocated across the cytoplasmic membrane), and thus conserves the redox energy in a proton gradient. The protein is NADH-quinone oxidoreductase subunit B of Thiobacillus denitrificans (strain ATCC 25259 / T1).